The following is a 359-amino-acid chain: Heme A synthase (359 aa).

6 helical membrane-spanning segments follow: residues 23–43, 85–105, 109–129, 137–157, 172–192, and 212–232; these read AVAFWLWSLAVLVFLMVVLGG, YAALFPDMDLAGFKFIFFFEW, LLGRLIGVATALPLLFFWLRG, LKLLGLLALGGLQGFVGWWMV, LAIHLILASLTFCFIVWLAAS, and AGLILLAILVQIGLGALVAGL. His276 serves as a coordination point for heme. The next 3 membrane-spanning stretches (helical) occupy residues 278-298, 308-328, and 329-349; these read MVAYLVLGLTLLQVFWTSGTL, IALLGLVLAQVILGILTLVLV, and VPLWAGLLHQAFAMLVLGMAV. His337 is a heme binding site.

Belongs to the COX15/CtaA family. Type 2 subfamily. In terms of assembly, interacts with CtaB. Heme b is required as a cofactor.

The protein localises to the cell membrane. The catalysed reaction is Fe(II)-heme o + 2 A + H2O = Fe(II)-heme a + 2 AH2. It functions in the pathway porphyrin-containing compound metabolism; heme A biosynthesis; heme A from heme O: step 1/1. Functionally, catalyzes the conversion of heme O to heme A by two successive hydroxylations of the methyl group at C8. The first hydroxylation forms heme I, the second hydroxylation results in an unstable dihydroxymethyl group, which spontaneously dehydrates, resulting in the formyl group of heme A. This Beijerinckia indica subsp. indica (strain ATCC 9039 / DSM 1715 / NCIMB 8712) protein is Heme A synthase.